A 27-amino-acid polypeptide reads, in one-letter code: Small ribosomal subunit protein bTHX (27 aa).

The span at 1–13 (MGKGDRRTRRGKI) shows a compositional bias: basic residues. Residues 1–27 (MGKGDRRTRRGKIWRGTYGKYRPRKKK) are disordered.

The protein belongs to the bacterial ribosomal protein bTHX family. In terms of assembly, part of the 30S ribosomal subunit.

Functionally, binds at the top of the head of the 30S subunit. It stabilizes a number of different RNA elements and thus is important for subunit structure. This Thermus aquaticus protein is Small ribosomal subunit protein bTHX (rpsU).